Here is a 273-residue protein sequence, read N- to C-terminus: Dermonecrotic toxin LsaSicTox-alphaIB1avi (273 aa).

Histidine 5 is a catalytic residue. Mg(2+) contacts are provided by glutamate 25 and aspartate 27. Residue histidine 41 is the Nucleophile of the active site. 2 disulfides stabilise this stretch: cysteine 45-cysteine 51 and cysteine 47-cysteine 190. Aspartate 85 provides a ligand contact to Mg(2+).

Belongs to the arthropod phospholipase D family. Class II subfamily. It depends on Mg(2+) as a cofactor. In terms of tissue distribution, expressed by the venom gland.

It localises to the secreted. It carries out the reaction an N-(acyl)-sphingosylphosphocholine = an N-(acyl)-sphingosyl-1,3-cyclic phosphate + choline. The enzyme catalyses an N-(acyl)-sphingosylphosphoethanolamine = an N-(acyl)-sphingosyl-1,3-cyclic phosphate + ethanolamine. It catalyses the reaction a 1-acyl-sn-glycero-3-phosphocholine = a 1-acyl-sn-glycero-2,3-cyclic phosphate + choline. The catalysed reaction is a 1-acyl-sn-glycero-3-phosphoethanolamine = a 1-acyl-sn-glycero-2,3-cyclic phosphate + ethanolamine. Functionally, dermonecrotic toxins cleave the phosphodiester linkage between the phosphate and headgroup of certain phospholipids (sphingolipid and lysolipid substrates), forming an alcohol (often choline) and a cyclic phosphate. This toxin acts on sphingomyelin (SM). It may also act on ceramide phosphoethanolamine (CPE), lysophosphatidylcholine (LPC) and lysophosphatidylethanolamine (LPE), but not on lysophosphatidylserine (LPS), and lysophosphatidylglycerol (LPG). It acts by transphosphatidylation, releasing exclusively cyclic phosphate products as second products. Induces dermonecrosis, hemolysis, increased vascular permeability, edema, inflammatory response, and platelet aggregation. The polypeptide is Dermonecrotic toxin LsaSicTox-alphaIB1avi (Loxosceles sabina (Tucson recluse spider)).